A 595-amino-acid chain; its full sequence is DNA damage-binding protein CMR1 (595 aa).

The tract at residues 20 to 79 (ALLDSLGLDPAGASSPFGSSPAPTSNKTKPKPKPAPKKRKAAAVIAVDEGPRRRSGRIAG) is disordered. The segment covering 29–46 (PAGASSPFGSSPAPTSNK) has biased composition (low complexity). Residues 47 to 60 (TKPKPKPAPKKRKA) are compositionally biased toward basic residues. 4 WD repeats span residues 185–226 (VTNE…MEKP), 255–297 (HAKN…ELFS), 300–339 (DEDL…RESG), and 349–389 (GRGA…SISS). The tract at residues 397–429 (AIEEEEEGTSTLSGQSSSLPHDTHPTRESDYST) is disordered. Positions 405-415 (TSTLSGQSSSL) are enriched in low complexity. Over residues 417 to 426 (HDTHPTRESD) the composition is skewed to basic and acidic residues. WD repeat units follow at residues 448–487 (QHGK…SLVD), 519–556 (LRAQ…VGLW), and 558–595 (DDVT…GDHI).

It belongs to the WD repeat DDB2/WDR76 family.

Functionally, DNA-binding protein that binds to both single- and double-stranded DNA. Binds preferentially to UV-damaged DNA. May be involved in DNA-metabolic processes. This Cryptococcus neoformans var. neoformans serotype D (strain B-3501A) (Filobasidiella neoformans) protein is DNA damage-binding protein CMR1.